Consider the following 356-residue polypeptide: Fructose-1,6-bisphosphatase class 1 1 (356 aa).

Residues Glu-106, Asp-129, Leu-131, and Asp-132 each coordinate Mg(2+). Substrate is bound by residues 132-135, Asn-225, Tyr-258, and Lys-288; that span reads DGSS. Residue Glu-294 coordinates Mg(2+).

This sequence belongs to the FBPase class 1 family. Homotetramer. The cofactor is Mg(2+).

The protein resides in the cytoplasm. It carries out the reaction beta-D-fructose 1,6-bisphosphate + H2O = beta-D-fructose 6-phosphate + phosphate. The protein operates within carbohydrate biosynthesis; gluconeogenesis. In Salinibacter ruber (strain DSM 13855 / M31), this protein is Fructose-1,6-bisphosphatase class 1 1.